The following is a 350-amino-acid chain: uncharacterized protein (350 aa).

The first 26 residues, 1–26 (MKKSGWLVVALIALVVLGVVTSIAVN), serve as a signal peptide directing secretion.

This is an uncharacterized protein from Archaeoglobus fulgidus (strain ATCC 49558 / DSM 4304 / JCM 9628 / NBRC 100126 / VC-16).